The primary structure comprises 366 residues: UDP-N-acetylenolpyruvoylglucosamine reductase (366 aa).

The region spanning 27 to 197 is the FAD-binding PCMH-type domain; that stretch reads LGGPAAGFVV…LRVRFLLRDG (171 aa). Residue Arg175 is part of the active site. Ser252 (proton donor) is an active-site residue. Glu358 is a catalytic residue.

The protein belongs to the MurB family. It depends on FAD as a cofactor.

The protein resides in the cytoplasm. It carries out the reaction UDP-N-acetyl-alpha-D-muramate + NADP(+) = UDP-N-acetyl-3-O-(1-carboxyvinyl)-alpha-D-glucosamine + NADPH + H(+). It participates in cell wall biogenesis; peptidoglycan biosynthesis. In terms of biological role, cell wall formation. The chain is UDP-N-acetylenolpyruvoylglucosamine reductase from Saccharopolyspora erythraea (strain ATCC 11635 / DSM 40517 / JCM 4748 / NBRC 13426 / NCIMB 8594 / NRRL 2338).